The chain runs to 1040 residues: FHF complex subunit HOOK-interacting protein 1A (1040 aa).

Disordered regions lie at residues 555-613 (PQQL…PIDP), 653-746 (SEDM…AAHP), and 769-808 (LMEQ…EDEE). The span at 653 to 664 (SEDMKDSQEEAA) shows a compositional bias: basic and acidic residues. Over residues 677-690 (VPINNGPLLSTQPE) the composition is skewed to polar residues. Basic and acidic residues-rich tracts occupy residues 696 to 719 (EWNR…REPE) and 783 to 804 (TKEE…KKEL).

This sequence belongs to the FHIP family. As to quaternary structure, may be a component of the FTS/Hook/FHIP complex (FHF complex), composed of AKTIP/FTS, FHIP1B, and one or more members of the Hook family of proteins HOOK1, HOOK2, and HOOK3. May interact directly with AKTIP/FTS.

Its function is as follows. Probable component of the FTS/Hook/FHIP complex (FHF complex). FHF complex promotes the distribution of AP-4 complex to the perinuclear area of the cell. The chain is FHF complex subunit HOOK-interacting protein 1A from Homo sapiens (Human).